The sequence spans 248 residues: MAAKPAIIALFDVDGTLTAPRKEVTPEMLKFMKELRKVVPVGVVGGSDLTKISEQLGKTVINDYDYVFAENGLVAYKDGAEVAIMSLKKLLGEEKLKEFINFTLKYIAELDIPIKRGTFIEFRNGMINVSPIGRNCSQEERDEFEKYDKIQKVRSTMVSVLREKFGHFNLTFSIGGQISFDVFPRGWDKTYSLRYLEDFNEIHFFGDKTFEGGNDYEIFASERTVGHTVTSPEDTMKQCTEIFLTKKE.

Aspartate 12 acts as the Nucleophile in catalysis. 2 residues coordinate Mg(2+): aspartate 12 and aspartate 14. Residue aspartate 14 is the Proton donor/acceptor of the active site. Alpha-D-mannose 1-phosphate is bound by residues arginine 21, arginine 123, arginine 134, arginine 141, serine 179, and aspartate 181. Positions 207, 219, and 224 each coordinate Mg(2+).

Belongs to the eukaryotic PMM family. Homodimer. Mg(2+) serves as cofactor.

Its subcellular location is the cytoplasm. It catalyses the reaction alpha-D-mannose 1-phosphate = D-mannose 6-phosphate. Its pathway is nucleotide-sugar biosynthesis; GDP-alpha-D-mannose biosynthesis; alpha-D-mannose 1-phosphate from D-fructose 6-phosphate: step 2/2. Catalyzes the interconversion of mannose-6-phosphate to mannose-1-phosphate, the precursor for the synthesis of GDP-mannose. GDP-mannose is an essential sugar nucleotide for the synthesis of D-mannose-containing cell wall polysaccharides (galactomannans and glucomannans), glycolipids, glycoproteins and the antioxidant L-ascorbate. In Spinacia oleracea (Spinach), this protein is Phosphomannomutase.